We begin with the raw amino-acid sequence, 67 residues long: Kappa-conotoxin-like 1 (67 aa).

The first 26 residues, 1–26 (MMFRLTSVSCFLLVIACLNLFQVVLT), serve as a signal peptide directing secretion. Cystine bridges form between Cys29-Cys43, Cys36-Cys48, Cys42-Cys51, and Cys47-Cys55. Ile59 bears the Isoleucine amide mark. Residues 63 to 67 (ATFQE) constitute a propeptide that is removed on maturation.

The protein belongs to the conotoxin I2 superfamily. Expressed by the venom duct.

The protein localises to the secreted. Inhibits the vertebrate voltage-gated potassium channels Kv1.1/KCNA1 and Kv1.3/KCNA3. The chain is Kappa-conotoxin-like 1 from Conus vexillum (Flag cone).